Here is a 273-residue protein sequence, read N- to C-terminus: tRNA (guanine-N(7)-)-methyltransferase (273 aa).

The S-adenosyl-L-methionine site is built by Gly-86, Glu-109, Arg-111, Asn-142, Ala-143, and Leu-162. Asp-165 is an active-site residue. Residues Pro-166–Lys-174 are alphaC helix. Positions 240 and 242 each coordinate S-adenosyl-L-methionine. The interval Thr-240 to Arg-248 is alpha6 helix.

This sequence belongs to the class I-like SAM-binding methyltransferase superfamily. TrmB family. In terms of assembly, catalytic component of the METTL1-WDR4 complex, composed of mettl1 and wdr4.

The protein resides in the nucleus. The catalysed reaction is guanosine(46) in tRNA + S-adenosyl-L-methionine = N(7)-methylguanosine(46) in tRNA + S-adenosyl-L-homocysteine. It carries out the reaction a guanosine in mRNA + S-adenosyl-L-methionine = an N(7)-methylguanosine in mRNA + S-adenosyl-L-homocysteine. The enzyme catalyses a guanosine in miRNA + S-adenosyl-L-methionine = an N(7)-methylguanosine in miRNA + S-adenosyl-L-homocysteine. Its pathway is tRNA modification; N(7)-methylguanine-tRNA biosynthesis. Functionally, catalytic component of METTL1-WDR4 methyltransferase complex that mediates the formation of N(7)-methylguanine in a subset of RNA species, such as tRNAs, mRNAs and microRNAs (miRNAs). Catalyzes the formation of N(7)-methylguanine at position 46 (m7G46) in a large subset of tRNAs that contain the 5'-RAGGU-3' motif within the variable loop. M7G46 interacts with C13-G22 in the D-loop to stabilize tRNA tertiary structure and protect tRNAs from decay. Also acts as a methyltransferase for a subset of internal N(7)-methylguanine in mRNAs. Internal N(7)-methylguanine methylation of mRNAs in response to stress promotes their relocalization to stress granules, thereby suppressing their translation. Also methylates a specific subset of miRNAs. The polypeptide is tRNA (guanine-N(7)-)-methyltransferase (mettl1) (Xenopus laevis (African clawed frog)).